Here is a 132-residue protein sequence, read N- to C-terminus: Protein NrdI (132 aa).

This sequence belongs to the NrdI family.

Its function is as follows. Probably involved in ribonucleotide reductase function. This chain is Protein NrdI, found in Bartonella tribocorum (strain CIP 105476 / IBS 506).